The following is a 600-amino-acid chain: 69 kDa paraflagellar rod protein (600 aa).

Residues 335–355 (DKQDEAWRRIQELERVLQRLG) are calmodulin-binding.

As to quaternary structure, heterodimer of a 69 kDa and a 73 kDa protein.

Its subcellular location is the cell projection. It is found in the cilium. The protein localises to the flagellum. The protein resides in the cytoplasm. It localises to the cytoskeleton. Major component of the paraflagellar rod (PFR). The PFR is a highly ordered lattices of fibrous proteins that are located inside the flagellum and assume a fixed orientation with respect to the microtubular axoneme. This chain is 69 kDa paraflagellar rod protein (PFRA), found in Trypanosoma brucei brucei.